Reading from the N-terminus, the 445-residue chain is Anaerobilin synthase (445 aa).

Residues 52 to 287 (TASPRKRLVY…LQGCDFMDDA (236 aa)) enclose the Radical SAM core domain. Tyr-61 is an S-adenosyl-L-methionine binding site. [4Fe-4S] cluster is bound by residues Cys-67 and Cys-71. Phe-73 is a binding site for S-adenosyl-L-methionine. [4Fe-4S] cluster is bound at residue Cys-74. S-adenosyl-L-methionine contacts are provided by residues Gly-118, 119 to 120 (GT), Glu-151, Gln-178, Arg-190, and Asp-215.

This sequence belongs to the anaerobic coproporphyrinogen-III oxidase family. ChuW/HutW subfamily. It depends on [4Fe-4S] cluster as a cofactor.

It catalyses the reaction 2 reduced [flavodoxin] + heme b + 2 S-adenosyl-L-methionine = anaerobilin + 2 oxidized [flavodoxin] + Fe(2+) + 5'-deoxyadenosine + L-methionine + S-adenosyl-L-homocysteine. Its activity is regulated as follows. Inhibited by exposure to molecular oxygen. Involved in heme degradation and iron utilization under anaerobic conditions. Catalyzes a radical-mediated mechanism facilitating iron liberation and the production of the tetrapyrrole product anaerobilin. Can use heme, mesoheme and deuteroheme as substrates. The chain is Anaerobilin synthase from Escherichia coli O157:H7.